The sequence spans 23 residues: Alyteserin-1d (23 aa).

Asparagine 23 bears the Asparagine amide mark.

As to expression, expressed by the skin glands.

Its subcellular location is the secreted. It localises to the target cell membrane. Antibacterial peptide with amphipathic alpha-helical structure. Shows selective growth inhibitory activity against the Gram-negative bacteria E.coli (MIC=25 uM) Has a weak hemolytic activity against human erythrocytes (LC(50)&gt;100 uM). Is very weakly active against S.aureus (MIC=200 uM). This is Alyteserin-1d from Alytes obstetricans (Common midwife toad).